The following is a 198-amino-acid chain: Probable thymidylate kinase (198 aa).

Residue 7 to 14 (GIDGAGKS) participates in ATP binding.

Belongs to the thymidylate kinase family.

The catalysed reaction is dTMP + ATP = dTDP + ADP. The sequence is that of Probable thymidylate kinase from Methanocorpusculum labreanum (strain ATCC 43576 / DSM 4855 / Z).